Here is a 453-residue protein sequence, read N- to C-terminus: UDP-N-acetylmuramate--L-alanine ligase (453 aa).

112–118 (GTHGKTT) lines the ATP pocket.

The protein belongs to the MurCDEF family.

The protein localises to the cytoplasm. The catalysed reaction is UDP-N-acetyl-alpha-D-muramate + L-alanine + ATP = UDP-N-acetyl-alpha-D-muramoyl-L-alanine + ADP + phosphate + H(+). Its pathway is cell wall biogenesis; peptidoglycan biosynthesis. Functionally, cell wall formation. In Bdellovibrio bacteriovorus (strain ATCC 15356 / DSM 50701 / NCIMB 9529 / HD100), this protein is UDP-N-acetylmuramate--L-alanine ligase.